Here is a 291-residue protein sequence, read N- to C-terminus: Proline iminopeptidase (291 aa).

In terms of domain architecture, AB hydrolase-1 spans 30–274 (LLIHGGPGSS…ANSRHLALLD (245 aa)). S103 (nucleophile) is an active-site residue. The active site involves D242. H269 functions as the Proton donor in the catalytic mechanism.

Belongs to the peptidase S33 family.

The protein localises to the cell envelope. The enzyme catalyses Release of N-terminal proline from a peptide.. Functionally, releases the N-terminal proline from various substrates. In Lacticaseibacillus rhamnosus (strain Lc 705) (Lactobacillus rhamnosus), this protein is Proline iminopeptidase.